Consider the following 270-residue polypeptide: Aliphatic sulfonates import ATP-binding protein SsuB 3 (270 aa).

The 222-residue stretch at 17–238 (LAVRNLKKAF…VRGSHRLAAL (222 aa)) folds into the ABC transporter domain. 49–56 (GRSGCGKS) lines the ATP pocket.

The protein belongs to the ABC transporter superfamily. Aliphatic sulfonates importer (TC 3.A.1.17.2) family. In terms of assembly, the complex is composed of two ATP-binding proteins (SsuB), two transmembrane proteins (SsuC) and a solute-binding protein (SsuA).

The protein localises to the cell inner membrane. The enzyme catalyses ATP + H2O + aliphatic sulfonate-[sulfonate-binding protein]Side 1 = ADP + phosphate + aliphatic sulfonateSide 2 + [sulfonate-binding protein]Side 1.. Part of the ABC transporter complex SsuABC involved in aliphatic sulfonates import. Responsible for energy coupling to the transport system. In Pseudomonas savastanoi pv. phaseolicola (strain 1448A / Race 6) (Pseudomonas syringae pv. phaseolicola (strain 1448A / Race 6)), this protein is Aliphatic sulfonates import ATP-binding protein SsuB 3.